A 468-amino-acid chain; its full sequence is ATP synthase subunit beta 1 (468 aa).

ATP is bound at residue 151-158 (GGAGVGKT).

Belongs to the ATPase alpha/beta chains family. As to quaternary structure, F-type ATPases have 2 components, CF(1) - the catalytic core - and CF(0) - the membrane proton channel. CF(1) has five subunits: alpha(3), beta(3), gamma(1), delta(1), epsilon(1). CF(0) has three main subunits: a(1), b(2) and c(9-12). The alpha and beta chains form an alternating ring which encloses part of the gamma chain. CF(1) is attached to CF(0) by a central stalk formed by the gamma and epsilon chains, while a peripheral stalk is formed by the delta and b chains.

It localises to the cell inner membrane. The catalysed reaction is ATP + H2O + 4 H(+)(in) = ADP + phosphate + 5 H(+)(out). Functionally, produces ATP from ADP in the presence of a proton gradient across the membrane. The catalytic sites are hosted primarily by the beta subunits. The polypeptide is ATP synthase subunit beta 1 (Photobacterium profundum (strain SS9)).